We begin with the raw amino-acid sequence, 509 residues long: O-acetyltransferase anaAT (509 aa).

This sequence belongs to the fumigaclavine B O-acetyltransferase family. In terms of assembly, monomer.

The enzyme catalyses (2R,3S,11R)-aszonalenin + acetyl-CoA = (2R,3S,11R)-acetylaszonalenin + CoA. It functions in the pathway alkaloid biosynthesis. Its function is as follows. O-acetyltransferase; part of the gene cluster that mediates the biosynthesis of the prenylated pyrroloindoline diketopiperazine acetylaszonalenin. The first step in the pathway is the formation of (R)-benzodiazepinedione by condensation of tryptophan and anthranilic acid catalyzed by the non-ribosomal peptide synthetase anaPS. The prenyltransferase anaPT then converts (R)-benzodiazepinedione to aszonalenin in the presence of dimethylallyl diphosphate (DMAPP) via C3-prenylation. The last step in the biosynthesis of acetylaszonalenin via acetylation of aszonalenin at position N1 catalyzed by anaAT. This Neosartorya fischeri (strain ATCC 1020 / DSM 3700 / CBS 544.65 / FGSC A1164 / JCM 1740 / NRRL 181 / WB 181) (Aspergillus fischerianus) protein is O-acetyltransferase anaAT.